A 369-amino-acid polypeptide reads, in one-letter code: MLLFTPGPVAINEEMRTSFSQPMPHHRTKDFEKIFQSVRENLKKMTGLEEVLLLSSSGTGAMEASVISLCQKELLFVNAGKFGERFGKIAKAHSIKAHELVYEWDTPAQVDEILSVLKANPNIDAFCIQACESSGGLRHPVEKIAQAIKETNPNVFVIVDAITALGVEPLEITHVDALIGGSQKAFMLPPAMSLVALSQNAIERIEERNVGFYFNLKSELKNQRNNTTSYTAPILHTLGLQRYFELVQNLGGFEALYRETKKAALATQKAVLALGLKIFPKSPSLSMTTIVNEHAKELRNLLKEKYQVQFAGGQEPYKDALIRINHMGIIPVYKSAYALNALELALNDLDLREFDGVANATFLKQYYGI.

K184 carries the N6-(pyridoxal phosphate)lysine modification.

This sequence belongs to the class-V pyridoxal-phosphate-dependent aminotransferase family. Pyridoxal 5'-phosphate serves as cofactor.

This is an uncharacterized protein from Helicobacter pylori (strain ATCC 700392 / 26695) (Campylobacter pylori).